A 222-amino-acid chain; its full sequence is Ribosomal RNA small subunit methyltransferase G (222 aa).

S-adenosyl-L-methionine-binding positions include G84, F89, 141–142, and R154; that span reads VE.

It belongs to the methyltransferase superfamily. RNA methyltransferase RsmG family.

The protein localises to the cytoplasm. It catalyses the reaction guanosine(527) in 16S rRNA + S-adenosyl-L-methionine = N(7)-methylguanosine(527) in 16S rRNA + S-adenosyl-L-homocysteine. In terms of biological role, specifically methylates the N7 position of guanine in position 527 of 16S rRNA. In Bradyrhizobium sp. (strain ORS 278), this protein is Ribosomal RNA small subunit methyltransferase G.